The chain runs to 517 residues: Glutamate--tRNA ligase (517 aa).

Positions 14-24 (PSPTGPLHIGG) match the 'HIGH' region motif. The 'KMSKS' region signature appears at 266 to 270 (KLSKR). K269 provides a ligand contact to ATP.

The protein belongs to the class-I aminoacyl-tRNA synthetase family. Glutamate--tRNA ligase type 1 subfamily. As to quaternary structure, monomer.

Its subcellular location is the cytoplasm. It catalyses the reaction tRNA(Glu) + L-glutamate + ATP = L-glutamyl-tRNA(Glu) + AMP + diphosphate. In terms of biological role, catalyzes the attachment of glutamate to tRNA(Glu) in a two-step reaction: glutamate is first activated by ATP to form Glu-AMP and then transferred to the acceptor end of tRNA(Glu). In Cytophaga hutchinsonii (strain ATCC 33406 / DSM 1761 / CIP 103989 / NBRC 15051 / NCIMB 9469 / D465), this protein is Glutamate--tRNA ligase.